A 205-amino-acid chain; its full sequence is MTKRSEAKYKIDRRMGQNIWGRPKSPVNRREYGPGQHGQRRKGKLSDFGVQLRAKQKLKGYYANISERQFHGIYVEASRLKGDTGENLIGLLERRLDAVVYRAKFVSTIFAARQFINHGHIKVNGRKVNISSYQLKVGDVVEVKEASKQLAHVLEASQLPERDTPDYLDVDHGKMTAKYIRIPGLSDVPFPVQMEPHLVVEFYSR.

The disordered stretch occupies residues 18–46; the sequence is NIWGRPKSPVNRREYGPGQHGQRRKGKLS. The S4 RNA-binding domain maps to 94–154; the sequence is RRLDAVVYRA…EASKQLAHVL (61 aa).

It belongs to the universal ribosomal protein uS4 family. Part of the 30S ribosomal subunit. Contacts protein S5. The interaction surface between S4 and S5 is involved in control of translational fidelity.

One of the primary rRNA binding proteins, it binds directly to 16S rRNA where it nucleates assembly of the body of the 30S subunit. Its function is as follows. With S5 and S12 plays an important role in translational accuracy. The protein is Small ribosomal subunit protein uS4 of Bradyrhizobium diazoefficiens (strain JCM 10833 / BCRC 13528 / IAM 13628 / NBRC 14792 / USDA 110).